Reading from the N-terminus, the 279-residue chain is Ribosomal RNA small subunit methyltransferase A (279 aa).

Residues N27, L29, G54, E76, D102, and N127 each contribute to the S-adenosyl-L-methionine site.

This sequence belongs to the class I-like SAM-binding methyltransferase superfamily. rRNA adenine N(6)-methyltransferase family. RsmA subfamily.

The protein resides in the cytoplasm. The catalysed reaction is adenosine(1518)/adenosine(1519) in 16S rRNA + 4 S-adenosyl-L-methionine = N(6)-dimethyladenosine(1518)/N(6)-dimethyladenosine(1519) in 16S rRNA + 4 S-adenosyl-L-homocysteine + 4 H(+). Functionally, specifically dimethylates two adjacent adenosines (A1518 and A1519) in the loop of a conserved hairpin near the 3'-end of 16S rRNA in the 30S particle. May play a critical role in biogenesis of 30S subunits. The sequence is that of Ribosomal RNA small subunit methyltransferase A from Mesorhizobium japonicum (strain LMG 29417 / CECT 9101 / MAFF 303099) (Mesorhizobium loti (strain MAFF 303099)).